A 92-amino-acid polypeptide reads, in one-letter code: Kinetoplastid membrane protein 11B (92 aa).

The protein belongs to the KMP-11 family. As to quaternary structure, monomer.

Its subcellular location is the cytoplasm. The protein resides in the cytoskeleton. It localises to the cell projection. The protein localises to the cilium. It is found in the flagellum. In terms of biological role, may be involved in the regulation of the cytoskeleton through interaction with the subpellicular microtubules. May be involved in parasite mobility and attachment to the surface of the host cell. Behaves as a strong immunogen during infection. The chain is Kinetoplastid membrane protein 11B (KMP-11B) from Leishmania infantum.